The sequence spans 198 residues: Transmembrane gamma-carboxyglutamic acid protein 2 (198 aa).

The first 17 residues, 1–17 (MRGRPSLLLVYMGLATC), serve as a signal peptide directing secretion. Residues 18-51 (LDTSPHREQNQVLDIFLDAPEAQSFLVGRRRFPR) constitute a propeptide that is removed on maturation. Positions 52-98 (ANHWDLELLTPGNLERECLEERCSWEEAREYFEDNTLTERFWESYTY) constitute a Gla domain. At 52–111 (ANHWDLELLTPGNLERECLEERCSWEEAREYFEDNTLTERFWESYTYNGKGGRGRVDVAG) the chain is on the extracellular side. Cysteine 69 and cysteine 74 are disulfide-bonded. Residue glutamate 72 is modified to 4-carboxyglutamate. Residues 112 to 132 (LAVGLTSGILLIVLAGLGAFW) traverse the membrane as a helical segment. The Cytoplasmic segment spans residues 133–198 (YLHYRRRRLR…PPYSSLRRPH (66 aa)). The tract at residues 156-198 (PLSPQTPQSPPLPPGLPTYEQALAASGVHDAPPPPYSSLRRPH) is disordered. Residues 162 to 171 (PQSPPLPPGL) show a composition bias toward pro residues. An LPXY motif; mediates binding to WW domain-containing proteins motif is present at residues 171–174 (LPTY). The short motif at 188 to 191 (PPPY) is the PPXY motif; mediates binding to WW domain-containing proteins element.

In terms of assembly, interacts with NEDD4. Interacts with transcriptional coactivator YAP1. Gamma-carboxyglutamate residues are formed by vitamin K dependent carboxylation. These residues are essential for the binding of calcium.

It is found in the cell membrane. The protein is Transmembrane gamma-carboxyglutamic acid protein 2 (Prrg2) of Mus musculus (Mouse).